Consider the following 293-residue polypeptide: NAD kinase (293 aa).

Residue Asp68 is the Proton acceptor of the active site. Residues 68-69 (DG), 142-143 (ND), Arg153, Asp172, and 183-188 (TAYSLS) each bind NAD(+).

This sequence belongs to the NAD kinase family. A divalent metal cation is required as a cofactor.

It is found in the cytoplasm. It carries out the reaction NAD(+) + ATP = ADP + NADP(+) + H(+). Involved in the regulation of the intracellular balance of NAD and NADP, and is a key enzyme in the biosynthesis of NADP. Catalyzes specifically the phosphorylation on 2'-hydroxyl of the adenosine moiety of NAD to yield NADP. The polypeptide is NAD kinase (Lachnospira eligens (strain ATCC 27750 / DSM 3376 / VPI C15-48 / C15-B4) (Eubacterium eligens)).